A 539-amino-acid chain; its full sequence is CTP synthase (539 aa).

Positions 1–267 (MTKYIFVTGG…DQKVVDFLHI (267 aa)) are amidoligase domain. Serine 13 provides a ligand contact to CTP. A UTP-binding site is contributed by serine 13. 14-19 (SLGKGI) lines the ATP pocket. Tyrosine 54 is a binding site for L-glutamine. Aspartate 71 contributes to the ATP binding site. Aspartate 71 and glutamate 141 together coordinate Mg(2+). CTP is bound by residues 148–150 (DME), 188–193 (KSKPTQ), and lysine 224. Residues 188–193 (KSKPTQ) and lysine 224 each bind UTP. Residues 294–537 (KITLVGKYVE…IGAASGLQVD (244 aa)) enclose the Glutamine amidotransferase type-1 domain. Glycine 356 contributes to the L-glutamine binding site. The active-site Nucleophile; for glutamine hydrolysis is cysteine 383. L-glutamine contacts are provided by residues 384–387 (LGMQ), glutamate 407, and arginine 465. Active-site residues include histidine 510 and glutamate 512.

Belongs to the CTP synthase family. Homotetramer.

The catalysed reaction is UTP + L-glutamine + ATP + H2O = CTP + L-glutamate + ADP + phosphate + 2 H(+). The enzyme catalyses L-glutamine + H2O = L-glutamate + NH4(+). It carries out the reaction UTP + NH4(+) + ATP = CTP + ADP + phosphate + 2 H(+). It participates in pyrimidine metabolism; CTP biosynthesis via de novo pathway; CTP from UDP: step 2/2. With respect to regulation, allosterically activated by GTP, when glutamine is the substrate; GTP has no effect on the reaction when ammonia is the substrate. The allosteric effector GTP functions by stabilizing the protein conformation that binds the tetrahedral intermediate(s) formed during glutamine hydrolysis. Inhibited by the product CTP, via allosteric rather than competitive inhibition. Its function is as follows. Catalyzes the ATP-dependent amination of UTP to CTP with either L-glutamine or ammonia as the source of nitrogen. Regulates intracellular CTP levels through interactions with the four ribonucleotide triphosphates. The protein is CTP synthase of Lactobacillus delbrueckii subsp. bulgaricus (strain ATCC 11842 / DSM 20081 / BCRC 10696 / JCM 1002 / NBRC 13953 / NCIMB 11778 / NCTC 12712 / WDCM 00102 / Lb 14).